Consider the following 102-residue polypeptide: MGALTKADLAEHLHAELGFSKREAKSMVEAFFEEIRSCLRENEQVKLSGFGNFDLRDKRERPGRNPKTGEEIPISARRVVTFRPGQKLKARVEDFDESKVVH.

The protein belongs to the bacterial histone-like protein family. As to quaternary structure, heterodimer of an alpha and a beta chain.

Functionally, this protein is one of the two subunits of integration host factor, a specific DNA-binding protein that functions in genetic recombination as well as in transcriptional and translational control. This is Integration host factor subunit alpha from Chromohalobacter salexigens (strain ATCC BAA-138 / DSM 3043 / CIP 106854 / NCIMB 13768 / 1H11).